A 373-amino-acid chain; its full sequence is Probable tRNA sulfurtransferase (373 aa).

The 105-residue stretch at 54-158 folds into the THUMP domain; that stretch reads NKNIEELSKV…NDVAYFYHKI (105 aa). ATP-binding positions include 176-177, 201-202, Lys256, Gly278, and Gln287; these read LF and NF.

Belongs to the ThiI family.

The protein localises to the cytoplasm. The catalysed reaction is [ThiI sulfur-carrier protein]-S-sulfanyl-L-cysteine + a uridine in tRNA + 2 reduced [2Fe-2S]-[ferredoxin] + ATP + H(+) = [ThiI sulfur-carrier protein]-L-cysteine + a 4-thiouridine in tRNA + 2 oxidized [2Fe-2S]-[ferredoxin] + AMP + diphosphate. It carries out the reaction [ThiS sulfur-carrier protein]-C-terminal Gly-Gly-AMP + S-sulfanyl-L-cysteinyl-[cysteine desulfurase] + AH2 = [ThiS sulfur-carrier protein]-C-terminal-Gly-aminoethanethioate + L-cysteinyl-[cysteine desulfurase] + A + AMP + 2 H(+). It functions in the pathway cofactor biosynthesis; thiamine diphosphate biosynthesis. Functionally, catalyzes the ATP-dependent transfer of a sulfur to tRNA to produce 4-thiouridine in position 8 of tRNAs, which functions as a near-UV photosensor. Also catalyzes the transfer of sulfur to the sulfur carrier protein ThiS, forming ThiS-thiocarboxylate. This is a step in the synthesis of thiazole, in the thiamine biosynthesis pathway. The sulfur is donated as persulfide by IscS. This chain is Probable tRNA sulfurtransferase, found in Saccharolobus islandicus (strain M.16.4 / Kamchatka #3) (Sulfolobus islandicus).